The sequence spans 965 residues: MTALIRIRGARTHNLKNLDLDLPRNTLIVITGLSGSGKSSLAFDTIYAEGQRRYVESLSAYARQFLSVMEKPDVDHIEGLSPAISIEQKSTSHNPRSTVGTITEIYDYLRLLYARVGQPRCPEHHYPLEAQTVSQMVDHVLTLDPEQRYMLLAPVVRERKGEHTQVFEQLRAQGFVRVRVDGELYEIDAVPTLTLRQKHTIEAVIDRFRPREDIKQRLAESFETALKLGNGMASVQTLDTTTATPHLFSSKYSCPVCDYSLPELEPRLFSFNAPMGACPACNGLGVTEFFDPAKVVIHPDLSLSAGAVRGWDRRNAYYFQLIASLAKHYTFDIDASWESLPEEIRHTILFGSGDEQINFTYLTEAGGRTKRKHRFEGIVPNLERRYRETESAAVREELAKYVSTRTCPECGGTRLNRAARNVFVADRTLPELTVLPINDALEFFKTLRLSGWRGEIAIKIVKEIGERLGFLVDVGLDYLTLERKADTLSGGEAQRIRLASQIGAGLVGVMYVLDEPSIGLHQRDNERLLGTLTRLRDLGNTVIVVEHDEDAIRQADHILDIGPGAGVHGGEICAQGSLEQIMAAPRSLTGQYLSGRRRIEIPKQRHPPNATKMLHLRGACGNNLKGVNLDIPEGLFTCITGVSGSGKSTLINDTLFTLAANEINGASHPIAPYASVDGLELFDKVVDIDQSPIGRTPRSNPATYTGMFTPLRELFAQVPEARARGYSPGRFSFNVRGGRCEACEGDGLIKVEMHFLPDVYVPCDICHGKRYNRETLEIRYKGYNINDVLEMTVEDALKLFEAVPAIARKLETLVDVGLSYLKLGQSATTLSGGEAQRVKLSKELSRRDTGHTLYILDEPTTGLHFYDIEALLAVMHKLRDAGNTVIVIEHNLDVIKTADWVIDLGPEGGGRGGEILVAGTPETVAAHPHSHTGHFLAKLLPPKDVSNCGHRNPKEEVDIAKTVHR.

32-39 serves as a coordination point for ATP; the sequence is GLSGSGKS. The segment at 254-281 adopts a C4-type zinc-finger fold; sequence CPVCDYSLPELEPRLFSFNAPMGACPAC. ABC transporter domains lie at 311 to 588 and 608 to 937; these read WDRR…PRSL and PNAT…HFLA. 641 to 648 is a binding site for ATP; that stretch reads GVSGSGKS. The segment at 740–766 adopts a C4-type zinc-finger fold; it reads CEACEGDGLIKVEMHFLPDVYVPCDIC.

This sequence belongs to the ABC transporter superfamily. UvrA family. Forms a heterotetramer with UvrB during the search for lesions.

The protein localises to the cytoplasm. Functionally, the UvrABC repair system catalyzes the recognition and processing of DNA lesions. UvrA is an ATPase and a DNA-binding protein. A damage recognition complex composed of 2 UvrA and 2 UvrB subunits scans DNA for abnormalities. When the presence of a lesion has been verified by UvrB, the UvrA molecules dissociate. This chain is UvrABC system protein A, found in Xylella fastidiosa (strain Temecula1 / ATCC 700964).